Consider the following 108-residue polypeptide: E3 ubiquitin-protein ligase Midline-1 (108 aa).

The B30.2/SPRY domain occupies K1–H100.

This sequence belongs to the TRIM/RBCC family. As to quaternary structure, homodimer or heterodimer with MID2. Interacts with IGBP1.

Its subcellular location is the cytoplasm. The protein localises to the cytoskeleton. It carries out the reaction S-ubiquitinyl-[E2 ubiquitin-conjugating enzyme]-L-cysteine + [acceptor protein]-L-lysine = [E2 ubiquitin-conjugating enzyme]-L-cysteine + N(6)-ubiquitinyl-[acceptor protein]-L-lysine.. Has E3 ubiquitin ligase activity towards IGBP1, promoting its monoubiquitination, which results in deprotection of the catalytic subunit of protein phosphatase PP2A, and its subsequent degradation by polyubiquitination. This is E3 ubiquitin-protein ligase Midline-1 (Mid1) from Mus caroli (Ryukyu mouse).